A 441-amino-acid polypeptide reads, in one-letter code: Phenylalanine-4-hydroxylase (441 aa).

The ACT domain maps to 23–102; sequence FSISKGSDKI…KATTLQESSN (80 aa). Residues His-273, His-278, and Glu-318 each contribute to the Fe cation site.

This sequence belongs to the biopterin-dependent aromatic amino acid hydroxylase family. Homotetramer. It depends on Fe(2+) as a cofactor.

The enzyme catalyses (6R)-L-erythro-5,6,7,8-tetrahydrobiopterin + L-phenylalanine + O2 = (4aS,6R)-4a-hydroxy-L-erythro-5,6,7,8-tetrahydrobiopterin + L-tyrosine. It carries out the reaction (6R)-L-erythro-5,6,7,8-tetrahydrobiopterin + L-tryptophan + O2 = 5-hydroxy-L-tryptophan + (4aS,6R)-4a-hydroxy-L-erythro-5,6,7,8-tetrahydrobiopterin. It functions in the pathway amino-acid degradation; L-phenylalanine degradation; acetoacetate and fumarate from L-phenylalanine: step 1/6. In terms of biological role, catalyzes the hydroxylation of L-phenylalanine. Hydroxylates L-tryptophan to 5-hydroxy-L-tryptophan but does not hydroxylate L-tyrosine to L-DOPA. It uses D-threo-tetrahydrodictyopterin (DH4), also known as dictyoperin, as a cofactor. The protein is Phenylalanine-4-hydroxylase (pah) of Dictyostelium discoideum (Social amoeba).